The chain runs to 262 residues: 3-methyl-2-oxobutanoate hydroxymethyltransferase (262 aa).

Mg(2+)-binding residues include Asp43 and Asp82. 3-methyl-2-oxobutanoate-binding positions include 43-44 (DS), Asp82, and Lys110. Glu112 lines the Mg(2+) pocket. Residue Glu179 is the Proton acceptor of the active site.

The protein belongs to the PanB family. Homodecamer; pentamer of dimers. Mg(2+) serves as cofactor.

The protein resides in the cytoplasm. The enzyme catalyses 3-methyl-2-oxobutanoate + (6R)-5,10-methylene-5,6,7,8-tetrahydrofolate + H2O = 2-dehydropantoate + (6S)-5,6,7,8-tetrahydrofolate. It participates in cofactor biosynthesis; (R)-pantothenate biosynthesis; (R)-pantoate from 3-methyl-2-oxobutanoate: step 1/2. Its function is as follows. Catalyzes the reversible reaction in which hydroxymethyl group from 5,10-methylenetetrahydrofolate is transferred onto alpha-ketoisovalerate to form ketopantoate. This Sodalis glossinidius (strain morsitans) protein is 3-methyl-2-oxobutanoate hydroxymethyltransferase.